A 128-amino-acid polypeptide reads, in one-letter code: Small ribosomal subunit protein bS6 (128 aa).

The segment at 97 to 128 (TTPSPMMKEEKSRSLTAAPATDEAKPAEAESA) is disordered. Over residues 118–128 (DEAKPAEAESA) the composition is skewed to basic and acidic residues.

It belongs to the bacterial ribosomal protein bS6 family.

Binds together with bS18 to 16S ribosomal RNA. The sequence is that of Small ribosomal subunit protein bS6 from Aromatoleum aromaticum (strain DSM 19018 / LMG 30748 / EbN1) (Azoarcus sp. (strain EbN1)).